The sequence spans 80 residues: U6-ctenitoxin-Pn1a (80 aa).

A signal peptide spans 1–21 (MWLKIQVFVLALALITLGIQA). Positions 22–37 (EPNSGPNNPLIQEEAR) are excised as a propeptide. 4 cysteine pairs are disulfide-bonded: Cys39–Cys54, Cys46–Cys59, Cys53–Cys69, and Cys61–Cys67. The propeptide occupies 72–80 (TLGDLFGRR).

The protein belongs to the neurotoxin 02 (plectoxin) family. 01 (Tx3) subfamily. Expressed by the venom gland.

The protein localises to the secreted. Its function is as follows. Antagonist of L-type calcium channels (Cav1/CACNA1). This is U6-ctenitoxin-Pn1a from Phoneutria nigriventer (Brazilian armed spider).